The primary structure comprises 103 residues: Small ribosomal subunit protein uS14c (103 aa).

The interval 34–56 (KVSPLSLSEKTKMQEKLQSLPRN) is disordered.

It belongs to the universal ribosomal protein uS14 family. As to quaternary structure, part of the 30S ribosomal subunit.

It is found in the plastid. It localises to the chloroplast. Functionally, binds 16S rRNA, required for the assembly of 30S particles. This Saccharum hybrid (Sugarcane) protein is Small ribosomal subunit protein uS14c.